The following is a 101-amino-acid chain: Small ribosomal subunit protein bS18c (101 aa).

The protein belongs to the bacterial ribosomal protein bS18 family. Part of the 30S ribosomal subunit.

The protein resides in the plastid. The protein localises to the chloroplast. The chain is Small ribosomal subunit protein bS18c from Guizotia abyssinica (Niger).